Reading from the N-terminus, the 210-residue chain is Calcium-activated potassium channel subunit beta-4 (210 aa).

The Cytoplasmic segment spans residues 1-19 (MAKLRVSYEYTEAEDKSIR). A helical transmembrane segment spans residues 20–40 (LGLFLIVSGILSLFIFGFCWL). Over 41–167 (SPALQDLQAT…DVLLQRTHDE (127 aa)) the chain is Extracellular. N53 and N90 each carry an N-linked (GlcNAc...) asparagine glycan. The chain crosses the membrane as a helical span at residues 168–188 (IVLLHCFLWPVVAFVVGVLIV). The Cytoplasmic portion of the chain corresponds to 189 to 210 (VLTICAKSLAVKAEAMKKRKFS).

It belongs to the KCNMB (TC 8.A.14.1) family. KCNMB4 subfamily. As to quaternary structure, interacts with KCNMA1 tetramer. There are probably 4 molecules of KCMNB4 per KCNMA1 tetramer. Interacts with FMR1 (via N-terminus). Post-translationally, phosphorylated. Phosphorylation modulates its effect on KCNMA1 activation kinetics. N-glycosylated. A highly glycosylated form is promoted by KCNMA1. Glycosylation, which is not required for the interaction with KCNMA1 and subcellular location, increases protection against charybdotoxin.

Its subcellular location is the membrane. Regulatory subunit of the calcium activated potassium KCNMA1 (maxiK) channel. Modulates the calcium sensitivity and gating kinetics of KCNMA1, thereby contributing to KCNMA1 channel diversity. Decreases the gating kinetics and calcium sensitivity of the KCNMA1 channel, but with fast deactivation kinetics. May decrease KCNMA1 channel openings at low calcium concentrations but increases channel openings at high calcium concentrations. Makes KCNMA1 channel resistant to 100 nM charybdotoxin (CTX) toxin concentrations. This chain is Calcium-activated potassium channel subunit beta-4 (Kcnmb4), found in Rattus norvegicus (Rat).